The following is a 338-amino-acid chain: Lipoate-protein ligase A (338 aa).

Residues 29 to 216 (PATQRVLFLW…AFFEHYSERV (188 aa)) form the BPL/LPL catalytic domain. ATP contacts are provided by residues arginine 71, 76–79 (GAVF), and lysine 134. Lysine 134 provides a ligand contact to (R)-lipoate.

Belongs to the LplA family. In terms of assembly, monomer.

It is found in the cytoplasm. It catalyses the reaction L-lysyl-[lipoyl-carrier protein] + (R)-lipoate + ATP = N(6)-[(R)-lipoyl]-L-lysyl-[lipoyl-carrier protein] + AMP + diphosphate + H(+). It participates in protein modification; protein lipoylation via exogenous pathway; protein N(6)-(lipoyl)lysine from lipoate: step 1/2. Its pathway is protein modification; protein lipoylation via exogenous pathway; protein N(6)-(lipoyl)lysine from lipoate: step 2/2. In terms of biological role, catalyzes both the ATP-dependent activation of exogenously supplied lipoate to lipoyl-AMP and the transfer of the activated lipoyl onto the lipoyl domains of lipoate-dependent enzymes. The protein is Lipoate-protein ligase A of Enterobacter sp. (strain 638).